Reading from the N-terminus, the 78-residue chain is Large ribosomal subunit protein bL28 (78 aa).

Residues 1 to 21 are disordered; it reads MSRVCQVTGKKPMVGNNRSHA.

The protein belongs to the bacterial ribosomal protein bL28 family.

The sequence is that of Large ribosomal subunit protein bL28 from Shewanella woodyi (strain ATCC 51908 / MS32).